The sequence spans 119 residues: Ribosome-binding factor A (119 aa).

It belongs to the RbfA family. In terms of assembly, monomer. Binds 30S ribosomal subunits, but not 50S ribosomal subunits or 70S ribosomes.

It is found in the cytoplasm. Its function is as follows. One of several proteins that assist in the late maturation steps of the functional core of the 30S ribosomal subunit. Associates with free 30S ribosomal subunits (but not with 30S subunits that are part of 70S ribosomes or polysomes). Required for efficient processing of 16S rRNA. May interact with the 5'-terminal helix region of 16S rRNA. The polypeptide is Ribosome-binding factor A (Chlorobium limicola (strain DSM 245 / NBRC 103803 / 6330)).